A 569-amino-acid chain; its full sequence is Laccase-6 (569 aa).

A signal peptide spans 1 to 29; sequence MTSSAVPSLFRLSFLLFTLQVMNIGRIGA. Plastocyanin-like domains lie at 37–153 and 163–315; these read KVQT…PKAS and NEHT…YIGA. Asn-83 carries an N-linked (GlcNAc...) asparagine glycan. The Cu cation site is built by His-87, His-89, His-132, and His-134. N-linked (GlcNAc...) asparagine glycans are attached at residues Asn-208, Asn-303, Asn-319, Asn-392, Asn-438, and Asn-444. The 137-residue stretch at 417–553 folds into the Plastocyanin-like 3 domain; the sequence is DFPTTPEKAY…STMFIVKNGK (137 aa). Cu cation contacts are provided by His-472, His-475, His-477, His-532, Cys-533, His-534, His-538, and Met-543.

This sequence belongs to the multicopper oxidase family. It depends on Cu cation as a cofactor. In terms of tissue distribution, predominantly expressed in the inflorescence stem, but not in siliques.

It is found in the secreted. The protein localises to the extracellular space. It localises to the apoplast. It carries out the reaction 4 hydroquinone + O2 = 4 benzosemiquinone + 2 H2O. Functionally, lignin degradation and detoxification of lignin-derived products. This Arabidopsis thaliana (Mouse-ear cress) protein is Laccase-6 (LAC6).